The following is a 551-amino-acid chain: Dihydroxy-acid dehydratase (551 aa).

Cys52 contributes to the [2Fe-2S] cluster binding site. Residue Asp84 coordinates Mg(2+). Cys125 provides a ligand contact to [2Fe-2S] cluster. Residues Asp126 and Lys127 each coordinate Mg(2+). At Lys127 the chain carries N6-carboxylysine. [2Fe-2S] cluster is bound at residue Cys197. Glu448 lines the Mg(2+) pocket. Ser474 acts as the Proton acceptor in catalysis.

Belongs to the IlvD/Edd family. Homodimer. [2Fe-2S] cluster is required as a cofactor. It depends on Mg(2+) as a cofactor.

It catalyses the reaction (2R)-2,3-dihydroxy-3-methylbutanoate = 3-methyl-2-oxobutanoate + H2O. The catalysed reaction is (2R,3R)-2,3-dihydroxy-3-methylpentanoate = (S)-3-methyl-2-oxopentanoate + H2O. It functions in the pathway amino-acid biosynthesis; L-isoleucine biosynthesis; L-isoleucine from 2-oxobutanoate: step 3/4. The protein operates within amino-acid biosynthesis; L-valine biosynthesis; L-valine from pyruvate: step 3/4. Functionally, functions in the biosynthesis of branched-chain amino acids. Catalyzes the dehydration of (2R,3R)-2,3-dihydroxy-3-methylpentanoate (2,3-dihydroxy-3-methylvalerate) into 2-oxo-3-methylpentanoate (2-oxo-3-methylvalerate) and of (2R)-2,3-dihydroxy-3-methylbutanoate (2,3-dihydroxyisovalerate) into 2-oxo-3-methylbutanoate (2-oxoisovalerate), the penultimate precursor to L-isoleucine and L-valine, respectively. The protein is Dihydroxy-acid dehydratase of Francisella tularensis subsp. tularensis (strain FSC 198).